Reading from the N-terminus, the 280-residue chain is 4-hydroxy-3-methylbut-2-enyl diphosphate reductase (280 aa).

A [4Fe-4S] cluster-binding site is contributed by C12. (2E)-4-hydroxy-3-methylbut-2-enyl diphosphate is bound by residues H40 and H72. Dimethylallyl diphosphate contacts are provided by H40 and H72. Positions 40 and 72 each coordinate isopentenyl diphosphate. A [4Fe-4S] cluster-binding site is contributed by C94. H122 contacts (2E)-4-hydroxy-3-methylbut-2-enyl diphosphate. Residue H122 coordinates dimethylallyl diphosphate. H122 is a binding site for isopentenyl diphosphate. Catalysis depends on E124, which acts as the Proton donor. T160 serves as a coordination point for (2E)-4-hydroxy-3-methylbut-2-enyl diphosphate. C188 serves as a coordination point for [4Fe-4S] cluster. 3 residues coordinate (2E)-4-hydroxy-3-methylbut-2-enyl diphosphate: S216, N218, and S260. The dimethylallyl diphosphate site is built by S216, N218, and S260. Isopentenyl diphosphate-binding residues include S216, N218, and S260.

This sequence belongs to the IspH family. [4Fe-4S] cluster is required as a cofactor.

It carries out the reaction isopentenyl diphosphate + 2 oxidized [2Fe-2S]-[ferredoxin] + H2O = (2E)-4-hydroxy-3-methylbut-2-enyl diphosphate + 2 reduced [2Fe-2S]-[ferredoxin] + 2 H(+). The enzyme catalyses dimethylallyl diphosphate + 2 oxidized [2Fe-2S]-[ferredoxin] + H2O = (2E)-4-hydroxy-3-methylbut-2-enyl diphosphate + 2 reduced [2Fe-2S]-[ferredoxin] + 2 H(+). It participates in isoprenoid biosynthesis; dimethylallyl diphosphate biosynthesis; dimethylallyl diphosphate from (2E)-4-hydroxy-3-methylbutenyl diphosphate: step 1/1. It functions in the pathway isoprenoid biosynthesis; isopentenyl diphosphate biosynthesis via DXP pathway; isopentenyl diphosphate from 1-deoxy-D-xylulose 5-phosphate: step 6/6. Catalyzes the conversion of 1-hydroxy-2-methyl-2-(E)-butenyl 4-diphosphate (HMBPP) into a mixture of isopentenyl diphosphate (IPP) and dimethylallyl diphosphate (DMAPP). Acts in the terminal step of the DOXP/MEP pathway for isoprenoid precursor biosynthesis. The protein is 4-hydroxy-3-methylbut-2-enyl diphosphate reductase of Pelobacter propionicus (strain DSM 2379 / NBRC 103807 / OttBd1).